Here is a 21-residue protein sequence, read N- to C-terminus: Protein YnfR (21 aa).

The chain is Protein YnfR from Escherichia coli (strain K12).